A 296-amino-acid polypeptide reads, in one-letter code: Formamidopyrimidine-DNA glycosylase (296 aa).

Catalysis depends on proline 2, which acts as the Schiff-base intermediate with DNA. Glutamate 3 functions as the Proton donor in the catalytic mechanism. Lysine 61 acts as the Proton donor; for beta-elimination activity in catalysis. DNA is bound by residues histidine 104, arginine 123, and lysine 169. The segment at aspartate 255 to proline 289 adopts an FPG-type zinc-finger fold. The Proton donor; for delta-elimination activity role is filled by arginine 279.

Belongs to the FPG family. Monomer. It depends on Zn(2+) as a cofactor.

The catalysed reaction is Hydrolysis of DNA containing ring-opened 7-methylguanine residues, releasing 2,6-diamino-4-hydroxy-5-(N-methyl)formamidopyrimidine.. The enzyme catalyses 2'-deoxyribonucleotide-(2'-deoxyribose 5'-phosphate)-2'-deoxyribonucleotide-DNA = a 3'-end 2'-deoxyribonucleotide-(2,3-dehydro-2,3-deoxyribose 5'-phosphate)-DNA + a 5'-end 5'-phospho-2'-deoxyribonucleoside-DNA + H(+). In terms of biological role, involved in base excision repair of DNA damaged by oxidation or by mutagenic agents. Acts as a DNA glycosylase that recognizes and removes damaged bases. Has a preference for oxidized purines, such as 7,8-dihydro-8-oxoguanine (8-oxoG). Has AP (apurinic/apyrimidinic) lyase activity and introduces nicks in the DNA strand. Cleaves the DNA backbone by beta-delta elimination to generate a single-strand break at the site of the removed base with both 3'- and 5'-phosphates. This chain is Formamidopyrimidine-DNA glycosylase, found in Mycobacterium sp. (strain JLS).